Consider the following 476-residue polypeptide: Cytochrome P450 6B5 (476 aa).

Cysteine 443 contacts heme.

This sequence belongs to the cytochrome P450 family. Heme is required as a cofactor.

Its subcellular location is the endoplasmic reticulum membrane. It localises to the microsome membrane. It carries out the reaction an organic molecule + reduced [NADPH--hemoprotein reductase] + O2 = an alcohol + oxidized [NADPH--hemoprotein reductase] + H2O + H(+). In terms of biological role, enables the insect to feed on furanocoumarin-producing plants and evolved as an adaptation for detoxification of xanthotoxin and other furanocoumarins. The chain is Cytochrome P450 6B5 (CYP6B5) from Papilio glaucus (Eastern tiger swallowtail butterfly).